Here is a 115-residue protein sequence, read N- to C-terminus: Large ribosomal subunit protein bL20 (115 aa).

This sequence belongs to the bacterial ribosomal protein bL20 family.

Functionally, binds directly to 23S ribosomal RNA and is necessary for the in vitro assembly process of the 50S ribosomal subunit. It is not involved in the protein synthesizing functions of that subunit. The sequence is that of Large ribosomal subunit protein bL20 from Cytophaga hutchinsonii (strain ATCC 33406 / DSM 1761 / CIP 103989 / NBRC 15051 / NCIMB 9469 / D465).